The primary structure comprises 832 residues: Histone acetyltransferase KAT2B (832 aa).

Residues methionine 1 to proline 22 are compositionally biased toward gly residues. 2 disordered regions span residues methionine 1–proline 54 and serine 395–valine 436. Pro residues predominate over residues alanine 24–glycine 39. Residues serine 40–proline 54 are compositionally biased toward low complexity. Polar residues predominate over residues serine 395–proline 413. Over residues proline 425–valine 436 the composition is skewed to basic and acidic residues. The region spanning leucine 503–asparagine 651 is the N-acetyltransferase domain. Glutamate 570 serves as the catalytic Proton donor/acceptor. Acetyl-CoA contacts are provided by residues cysteine 574 to valine 576, glutamine 581 to threonine 587, and tyrosine 612 to glycine 615. The tract at residues isoleucine 706 to proline 725 is disordered. Over residues serine 714–proline 725 the composition is skewed to basic and acidic residues. Residues arginine 723–alanine 827 enclose the Bromo domain.

This sequence belongs to the acetyltransferase family. GCN5 subfamily. As to quaternary structure, interacts with SIRT1. Interacts (unsumoylated form) with NR2C1; the interaction promotes transactivation activity. Interacts with EP300, CREBBP and DDX17. Interacts with NCOA1 and NCOA3. Component of a large chromatin remodeling complex, at least composed of MYSM1, KAT2B/PCAF, RBM10 and KIF11/TRIP5. Interacts with NR2C2 (hypophosphorylated and unsumoylated form); the interaction promotes the transactivation activity of NR2C2. Interacts with KLF1; the interaction does not acetylate KLF1 and there is no enhancement of its transactivational activity. Interacts with NFE4. Interacts with MECOM. Interacts with E2F1; the interaction acetylates E2F1 augmenting its DNA-binding and transcriptional activity. Interacts with NPAS2, BMAL1 and CLOCK. Interacts with BCAS3. Interacts with CEBPB. Interacts with NR4A3. Interacts with NFATC2. Interacts with TBX5. Interacts with PLK4. Interacts with RB1; this interaction leads to RB1 acetylation. Interacts with VRK1. (Microbial infection) Interacts with and acetylates HIV-1 Tat. In terms of assembly, (Microbial infection) Interacts with HTLV-1 Tax. As to expression, ubiquitously expressed but most abundant in heart and skeletal muscle. Also expressed in the skin, in keratinocytes (at protein level).

It is found in the nucleus. The protein localises to the cytoplasm. The protein resides in the cytoskeleton. It localises to the microtubule organizing center. Its subcellular location is the centrosome. It carries out the reaction L-lysyl-[histone] + acetyl-CoA = N(6)-acetyl-L-lysyl-[histone] + CoA + H(+). It catalyses the reaction L-lysyl-[protein] + acetyl-CoA = N(6)-acetyl-L-lysyl-[protein] + CoA + H(+). The catalysed reaction is spermidine + acetyl-CoA = N(8)-acetylspermidine + CoA + H(+). Its activity is regulated as follows. Activated in vitro by very low concentrations of spermidine, but inhibited at spermidine concentrations higher than 4 uM. The activating effect of low spermidine concentrations may be mediated by N(8)-acetylspermidine produced by KAT2B/P/CAF itself acting as a positive feedback loop. Functions as a histone acetyltransferase (HAT) to promote transcriptional activation. Has significant histone acetyltransferase activity with core histones (H3 and H4), and also with nucleosome core particles. Has a a strong preference for acetylation of H3 at 'Lys-9' (H3K9ac). Also acetylates non-histone proteins, such as ACLY, MAPRE1/EB1, PLK4, RRP9/U3-55K and TBX5. Inhibits cell-cycle progression and counteracts the mitogenic activity of the adenoviral oncoprotein E1A. Acts as a circadian transcriptional coactivator which enhances the activity of the circadian transcriptional activators: NPAS2-BMAL1 and CLOCK-BMAL1 heterodimers. Involved in heart and limb development by mediating acetylation of TBX5, acetylation regulating nucleocytoplasmic shuttling of TBX5. Acts as a negative regulator of centrosome amplification by mediating acetylation of PLK4. Acetylates RRP9/U3-55K, a core subunit of the U3 snoRNP complex, impairing pre-rRNA processing. Acetylates MAPRE1/EB1, promoting dynamic kinetochore-microtubule interactions in early mitosis. Also acetylates spermidine. Functionally, (Microbial infection) In case of HIV-1 infection, it is recruited by the viral protein Tat. Regulates Tat's transactivating activity and may help inducing chromatin remodeling of proviral genes. The polypeptide is Histone acetyltransferase KAT2B (Homo sapiens (Human)).